Reading from the N-terminus, the 247-residue chain is 3-deoxy-manno-octulosonate cytidylyltransferase (247 aa).

This sequence belongs to the KdsB family.

It is found in the cytoplasm. It carries out the reaction 3-deoxy-alpha-D-manno-oct-2-ulosonate + CTP = CMP-3-deoxy-beta-D-manno-octulosonate + diphosphate. It participates in nucleotide-sugar biosynthesis; CMP-3-deoxy-D-manno-octulosonate biosynthesis; CMP-3-deoxy-D-manno-octulosonate from 3-deoxy-D-manno-octulosonate and CTP: step 1/1. The protein operates within bacterial outer membrane biogenesis; lipopolysaccharide biosynthesis. In terms of biological role, activates KDO (a required 8-carbon sugar) for incorporation into bacterial lipopolysaccharide in Gram-negative bacteria. In Methylorubrum extorquens (strain CM4 / NCIMB 13688) (Methylobacterium extorquens), this protein is 3-deoxy-manno-octulosonate cytidylyltransferase.